The chain runs to 1947 residues: DNA-directed RNA polymerase subunit beta' (1947 aa).

Cys-119, Cys-121, Cys-141, and Cys-144 together coordinate Zn(2+). The Mg(2+) site is built by Asp-1778, Asp-1780, and Asp-1782.

This sequence belongs to the RNA polymerase beta' chain family. RpoC1 subfamily. In terms of assembly, in plastids the minimal PEP RNA polymerase catalytic core is composed of four subunits: alpha, beta, beta', and beta''. When a (nuclear-encoded) sigma factor is associated with the core the holoenzyme is formed, which can initiate transcription. Mg(2+) serves as cofactor. It depends on Zn(2+) as a cofactor.

The protein resides in the plastid. The protein localises to the chloroplast. The enzyme catalyses RNA(n) + a ribonucleoside 5'-triphosphate = RNA(n+1) + diphosphate. In terms of biological role, DNA-dependent RNA polymerase catalyzes the transcription of DNA into RNA using the four ribonucleoside triphosphates as substrates. The chain is DNA-directed RNA polymerase subunit beta' from Oedogonium cardiacum (Filamentous green alga).